The sequence spans 601 residues: DNA ligase 2 (601 aa).

Residue Glu-263 coordinates ATP. Lys-265 (N6-AMP-lysine intermediate) is an active-site residue. ATP is bound by residues Arg-270, Arg-285, Glu-314, Phe-354, Arg-432, and Lys-438.

This sequence belongs to the ATP-dependent DNA ligase family. The cofactor is Mg(2+).

It carries out the reaction ATP + (deoxyribonucleotide)n-3'-hydroxyl + 5'-phospho-(deoxyribonucleotide)m = (deoxyribonucleotide)n+m + AMP + diphosphate.. Functionally, DNA ligase that seals nicks in double-stranded DNA during DNA replication, DNA recombination and DNA repair. The protein is DNA ligase 2 of Thermofilum pendens (strain DSM 2475 / Hrk 5).